Reading from the N-terminus, the 376-residue chain is Mitogen-activated protein kinase ERK-A (376 aa).

In terms of domain architecture, Protein kinase spans 38-326 (YIKLAYIGEG…VEEALAHPYL (289 aa)). Residues 44-52 (IGEGAYGMV) and Lys67 contribute to the ATP site. Catalysis depends on Asp162, which acts as the Proton acceptor. Thr198 carries the phosphothreonine modification. The short motif at 198–200 (TEY) is the TXY element. Tyr200 is modified (phosphotyrosine).

Belongs to the protein kinase superfamily. CMGC Ser/Thr protein kinase family. MAP kinase subfamily. Requires Mg(2+) as cofactor. Post-translationally, dually phosphorylated on Thr-198 and Tyr-200, which activates the enzyme. Phosphorylated on tyrosine residue(s) in response to insulin. In terms of tissue distribution, in third instar larvae, expressed in eye imaginal disks. In adults, expressed in head and body.

It is found in the cytoplasm. It localises to the nucleus. The enzyme catalyses L-seryl-[protein] + ATP = O-phospho-L-seryl-[protein] + ADP + H(+). It carries out the reaction L-threonyl-[protein] + ATP = O-phospho-L-threonyl-[protein] + ADP + H(+). Its activity is regulated as follows. Activated by tyrosine and threonine phosphorylation. In terms of biological role, serine/threonine kinase which acts as an essential component of the MAP kinase signal transduction pathway to regulate proliferation, differentiation and effect cell fate decisions in various tissues. Required downstream of phl/Raf in the sev/sevenless, tor/torso, and EGF receptor homolog Egfr signal transduction pathways. Required for embryonic epithelial tissue repair. During larval development, mediates Ptth/tor signaling leading to the production of ecdysone, a hormone required for the initiation of metamorphosis. This chain is Mitogen-activated protein kinase ERK-A, found in Drosophila melanogaster (Fruit fly).